The chain runs to 599 residues: MTSENPLDPNNAYAAADDAPLSEGDPTGAPADSGSDTLTAIQAARVAVKTLLDGGVRYVVVSPGSRSAPMAYALAEADAAGRVELLVRIDERSAGFTALGLALSTGAPVAVLTTSGTAVGNLLPAVMEANHAAVPLVVLSADRPDELRGTGANQTTDQLDLFGEHVRFAVDVPAGTNPQRAVETALSAATGVFEDTPPGPVQLNLAFRDPLVPPPADHLPEATGRRTWQIGRGPEPLTLAPAPATLAERRTVVLAGHDAGPVAEAFARAHGLPLLAEPSSNSRFGPNAVGPYRLLLEHFGPDSAQPIERVVLFGRPTLSRPVSALLARADVPSALYQPLPVAWYEPGRRTELPLDNLSDLADFSGRGSSGWLDAWLLAGAAAQHALDQALSEEPAATGPTVGALVWKHARGQLMLGSSNGIRDVDLAGQPAPEPHATIFANRGLAGIDGTISTATGIAWGGRQETTLLLGDVTFLHDAGGLLLGFAENDPLLRIVVLNDAGGAIFNLLEHGAVQESGTYGNAVERLFGTPHKVDISSLAAAYGVEHCAVSTTAELAKALAAPSSGRSIIEVRTDRAGLRKLHGRIKAAVGEAARSVLAG.

Low complexity predominate over residues 1 to 21; the sequence is MTSENPLDPNNAYAAADDAPL. The disordered stretch occupies residues 1 to 35; sequence MTSENPLDPNNAYAAADDAPLSEGDPTGAPADSGS.

The protein belongs to the TPP enzyme family. MenD subfamily. In terms of assembly, homodimer. Mg(2+) is required as a cofactor. It depends on Mn(2+) as a cofactor. The cofactor is thiamine diphosphate.

It carries out the reaction isochorismate + 2-oxoglutarate + H(+) = 5-enolpyruvoyl-6-hydroxy-2-succinyl-cyclohex-3-ene-1-carboxylate + CO2. Its pathway is quinol/quinone metabolism; 1,4-dihydroxy-2-naphthoate biosynthesis; 1,4-dihydroxy-2-naphthoate from chorismate: step 2/7. The protein operates within quinol/quinone metabolism; menaquinone biosynthesis. In terms of biological role, catalyzes the thiamine diphosphate-dependent decarboxylation of 2-oxoglutarate and the subsequent addition of the resulting succinic semialdehyde-thiamine pyrophosphate anion to isochorismate to yield 2-succinyl-5-enolpyruvyl-6-hydroxy-3-cyclohexene-1-carboxylate (SEPHCHC). The protein is 2-succinyl-5-enolpyruvyl-6-hydroxy-3-cyclohexene-1-carboxylate synthase of Arthrobacter sp. (strain FB24).